Here is a 207-residue protein sequence, read N- to C-terminus: Thiamine-phosphate synthase (207 aa).

Residues 36-40 (QLRMK) and asparagine 68 contribute to the 4-amino-2-methyl-5-(diphosphooxymethyl)pyrimidine site. 2 residues coordinate Mg(2+): aspartate 69 and aspartate 88. A 4-amino-2-methyl-5-(diphosphooxymethyl)pyrimidine-binding site is contributed by serine 106. 2-[(2R,5Z)-2-carboxy-4-methylthiazol-5(2H)-ylidene]ethyl phosphate is bound at residue 132–134 (TNT). Lysine 135 provides a ligand contact to 4-amino-2-methyl-5-(diphosphooxymethyl)pyrimidine. Residues glycine 162 and 182-183 (VS) contribute to the 2-[(2R,5Z)-2-carboxy-4-methylthiazol-5(2H)-ylidene]ethyl phosphate site.

This sequence belongs to the thiamine-phosphate synthase family. Mg(2+) is required as a cofactor.

The catalysed reaction is 2-[(2R,5Z)-2-carboxy-4-methylthiazol-5(2H)-ylidene]ethyl phosphate + 4-amino-2-methyl-5-(diphosphooxymethyl)pyrimidine + 2 H(+) = thiamine phosphate + CO2 + diphosphate. The enzyme catalyses 2-(2-carboxy-4-methylthiazol-5-yl)ethyl phosphate + 4-amino-2-methyl-5-(diphosphooxymethyl)pyrimidine + 2 H(+) = thiamine phosphate + CO2 + diphosphate. It catalyses the reaction 4-methyl-5-(2-phosphooxyethyl)-thiazole + 4-amino-2-methyl-5-(diphosphooxymethyl)pyrimidine + H(+) = thiamine phosphate + diphosphate. It participates in cofactor biosynthesis; thiamine diphosphate biosynthesis; thiamine phosphate from 4-amino-2-methyl-5-diphosphomethylpyrimidine and 4-methyl-5-(2-phosphoethyl)-thiazole: step 1/1. In terms of biological role, condenses 4-methyl-5-(beta-hydroxyethyl)thiazole monophosphate (THZ-P) and 2-methyl-4-amino-5-hydroxymethyl pyrimidine pyrophosphate (HMP-PP) to form thiamine monophosphate (TMP). The sequence is that of Thiamine-phosphate synthase from Methanococcus maripaludis (strain C7 / ATCC BAA-1331).